A 658-amino-acid chain; its full sequence is UvrABC system protein B (658 aa).

A Helicase ATP-binding domain is found at 26–413 (EGINSGKKKQ…SPEVIEQIIR (388 aa)). 39–46 (GATGTGKT) contributes to the ATP binding site. The Beta-hairpin motif lies at 92-115 (YYDYYQPEAYVPQTDTFIEKDAQI). The region spanning 430–596 (QIDDLLGEIQ…TIQKGVRDVI (167 aa)) is the Helicase C-terminal domain. A UVR domain is found at 622–657 (EKTIAKMEAEMKEAAKALDFERAAELRDLLLELKAE).

The protein belongs to the UvrB family. In terms of assembly, forms a heterotetramer with UvrA during the search for lesions. Interacts with UvrC in an incision complex.

Its subcellular location is the cytoplasm. In terms of biological role, the UvrABC repair system catalyzes the recognition and processing of DNA lesions. A damage recognition complex composed of 2 UvrA and 2 UvrB subunits scans DNA for abnormalities. Upon binding of the UvrA(2)B(2) complex to a putative damaged site, the DNA wraps around one UvrB monomer. DNA wrap is dependent on ATP binding by UvrB and probably causes local melting of the DNA helix, facilitating insertion of UvrB beta-hairpin between the DNA strands. Then UvrB probes one DNA strand for the presence of a lesion. If a lesion is found the UvrA subunits dissociate and the UvrB-DNA preincision complex is formed. This complex is subsequently bound by UvrC and the second UvrB is released. If no lesion is found, the DNA wraps around the other UvrB subunit that will check the other stand for damage. This chain is UvrABC system protein B, found in Bacillus cereus (strain ATCC 10987 / NRS 248).